A 550-amino-acid polypeptide reads, in one-letter code: Probable acyl-activating enzyme 9 (550 aa).

Belongs to the ATP-dependent AMP-binding enzyme family. As to expression, expressed in leaves, flowers and developing seeds.

Functionally, may act as an acid--thiol ligase that activates carboxylic acids by forming acyl-CoAs. This Arabidopsis thaliana (Mouse-ear cress) protein is Probable acyl-activating enzyme 9 (AEE9).